An 87-amino-acid polypeptide reads, in one-letter code: Kappa-bungarotoxin (87 aa).

The signal sequence occupies residues 1-21; sequence MKTLLLTLVVVTIVCLDLGYT. 5 cysteine pairs are disulfide-bonded: Cys-24/Cys-42, Cys-35/Cys-63, Cys-48/Cys-52, Cys-67/Cys-79, and Cys-80/Cys-85.

Belongs to the three-finger toxin family. Long-chain subfamily. Kappa-neurotoxin sub-subfamily. Homodimer and heterodimer; non-covalently linked. Expressed by the venom gland.

Its subcellular location is the secreted. Its function is as follows. Postsynaptic neurotoxin that binds and inhibits neuronal nicotinic acetylcholine receptors (nAChR) with high affinity (IC(50)&lt;100 nM). Is a selective, and slowly reversible antagonist of alpha-3/CHRNA3-containing and some alpha-4/CHRNA4-containing AChRs. The polypeptide is Kappa-bungarotoxin (Bungarus multicinctus (Many-banded krait)).